The following is a 473-amino-acid chain: Inactive FRIGIDA-like protein 2 (473 aa).

Coiled coils occupy residues 3–35 (AAES…RSLL) and 306–361 (SLKV…RATK). Residues 356 to 384 (RKRATKFNSPANPQQPQEQKVDNKRPRVA) form a disordered region. Residues 361 to 373 (KFNSPANPQQPQE) are compositionally biased toward polar residues.

Belongs to the Frigida family. Expressed at low levels throughout the plant, with slightly higher expression in developing seeds and the highest expression in pollen.

Functionally, inactive FRIGIDA-like 2 protein. The sequence is that of Inactive FRIGIDA-like protein 2 (FRL2) from Arabidopsis thaliana (Mouse-ear cress).